The following is a 45-amino-acid chain: Large ribosomal subunit protein bL34 (45 aa).

A disordered region spans residues 26–45; the sequence is RAGRSILSARRSKGRSQLSA.

Belongs to the bacterial ribosomal protein bL34 family.

The sequence is that of Large ribosomal subunit protein bL34 from Parafrankia sp. (strain EAN1pec).